Here is a 118-residue protein sequence, read N- to C-terminus: Ribonuclease P protein component (118 aa).

It belongs to the RnpA family. As to quaternary structure, consists of a catalytic RNA component (M1 or rnpB) and a protein subunit.

The enzyme catalyses Endonucleolytic cleavage of RNA, removing 5'-extranucleotides from tRNA precursor.. Its function is as follows. RNaseP catalyzes the removal of the 5'-leader sequence from pre-tRNA to produce the mature 5'-terminus. It can also cleave other RNA substrates such as 4.5S RNA. The protein component plays an auxiliary but essential role in vivo by binding to the 5'-leader sequence and broadening the substrate specificity of the ribozyme. This Petrotoga mobilis (strain DSM 10674 / SJ95) protein is Ribonuclease P protein component.